The primary structure comprises 346 residues: Dihydroorotate dehydrogenase (quinone) (346 aa).

FMN contacts are provided by residues A62–K66 and T86. Residue K66 coordinates substrate. A substrate-binding site is contributed by N111 to F115. The FMN site is built by N142 and N175. N175 provides a ligand contact to substrate. S178 functions as the Nucleophile in the catalytic mechanism. N180 is a binding site for substrate. The FMN site is built by K211 and V239. N240 to T241 serves as a coordination point for substrate. FMN contacts are provided by residues G261, G289, and Y310–T311.

Belongs to the dihydroorotate dehydrogenase family. Type 2 subfamily. In terms of assembly, monomer. FMN is required as a cofactor.

Its subcellular location is the cell membrane. The enzyme catalyses (S)-dihydroorotate + a quinone = orotate + a quinol. It participates in pyrimidine metabolism; UMP biosynthesis via de novo pathway; orotate from (S)-dihydroorotate (quinone route): step 1/1. Its function is as follows. Catalyzes the conversion of dihydroorotate to orotate with quinone as electron acceptor. The sequence is that of Dihydroorotate dehydrogenase (quinone) from Thermus thermophilus (strain ATCC BAA-163 / DSM 7039 / HB27).